The sequence spans 555 residues: Urocanate hydratase (555 aa).

NAD(+) contacts are provided by residues 51-52 (GG), Q129, 175-177 (GMG), E195, 262-266 (QTSAH), 272-273 (YL), and Y321. C409 is an active-site residue. G491 contacts NAD(+).

This sequence belongs to the urocanase family. It depends on NAD(+) as a cofactor.

The protein localises to the cytoplasm. The enzyme catalyses 4-imidazolone-5-propanoate = trans-urocanate + H2O. It participates in amino-acid degradation; L-histidine degradation into L-glutamate; N-formimidoyl-L-glutamate from L-histidine: step 2/3. In terms of biological role, catalyzes the conversion of urocanate to 4-imidazolone-5-propionate. This chain is Urocanate hydratase, found in Stenotrophomonas maltophilia (strain R551-3).